A 459-amino-acid chain; its full sequence is Glycosyl hydrolase family 109 protein (459 aa).

The tat-type signal signal peptide spans 1-31 (MHNIHRRNFLKAAGAATAGLVTANIALSAYA). NAD(+) is bound by residues 64–65 (ER), D86, 135–138 (WEWH), 155–156 (EV), and N184. Residues Y213, R232, 244-247 (YPTH), and Y326 contribute to the substrate site. Y244 is an NAD(+) binding site.

This sequence belongs to the Gfo/Idh/MocA family. Glycosyl hydrolase 109 subfamily. NAD(+) serves as cofactor. Post-translationally, predicted to be exported by the Tat system. The position of the signal peptide cleavage has not been experimentally proven.

Functionally, glycosidase. The polypeptide is Glycosyl hydrolase family 109 protein (Shewanella baltica (strain OS185)).